Consider the following 195-residue polypeptide: Probable GTP-binding protein EngB (195 aa).

The region spanning 22 to 195 (GLPEIALAGR…WGAIKKMINR (174 aa)) is the EngB-type G domain. GTP is bound by residues 30-37 (GRSNVGKS), 57-61 (GKTQT), 75-78 (DVPG), 142-145 (TKAD), and 174-176 (FSS). Mg(2+) is bound by residues Ser-37 and Thr-59.

This sequence belongs to the TRAFAC class TrmE-Era-EngA-EngB-Septin-like GTPase superfamily. EngB GTPase family. It depends on Mg(2+) as a cofactor.

Necessary for normal cell division and for the maintenance of normal septation. Functionally, binds GTP and GDP. The polypeptide is Probable GTP-binding protein EngB (Bacillus subtilis (strain 168)).